We begin with the raw amino-acid sequence, 291 residues long: Protein US2 (291 aa).

G2 is subject to N-acetylglycine; by host; partial. The interval 251–270 (PEVPDEQPTSPGRGPQETDP) is disordered.

This sequence belongs to the herpesviridae HHV-1 US2 protein family. As to quaternary structure, interacts with host KRT18.

It localises to the host cytoplasm. It is found in the host nucleus. The polypeptide is Protein US2 (Homo sapiens (Human)).